The following is a 315-amino-acid chain: WD repeat domain-containing protein 83 (315 aa).

7 WD repeats span residues 23–62 (CSQG…LLRT), 65–104 (GHGY…VVRK), 107–146 (GHAG…PEPV), 151–188 (EARD…VSSD), 190–228 (VGSP…LLGE), 231–272 (GHKN…LALA), and 275–313 (VGSN…AEGG).

This sequence belongs to the WD repeat MORG1 family. Interacts with EGLN3/PHD3. Interacts with ERK signaling proteins MAP2K1/MEK1, MAP2K2/MEK2, LAMTOR3, ARAF/Raf-1, MAPK1/ERK2 and MAPK3/ERK1. Identified in the spliceosome C complex. Interacts with PARD6B and CRB3. Interacts strongly with GTP-bound RRAGA but not with inactive GDP-bound. Interacts with p62/SQSTM1. Ubiquitous.

Its subcellular location is the cytoplasm. It is found in the lysosome. The protein resides in the nucleus. Molecular scaffold protein for various multimeric protein complexes. Acts as a module in the assembly of a multicomponent scaffold for the ERK pathway, linking ERK responses to specific agonists. At low concentrations it enhances ERK activation, whereas high concentrations lead to the inhibition of ERK activation. Also involved in response to hypoxia by acting as a negative regulator of HIF1A/HIF-1-alpha via its interaction with EGLN3/PHD3. May promote degradation of HIF1A. May act by recruiting signaling complexes to a specific upstream activator. May also be involved in pre-mRNA splicing. Participates in tight junction development by regulating apico-basal polarity, a key step in tissue development and organization. Mechanistically, regulates the translocation of PAR6-aPKC from the cytoplasm to the apical surface by acting as an adapter between PARD6B AND CRB3. Also acts as a negative regulator of mTORC1 under nutrient-rich conditions by binding to the active Rag GTPases to inhibit mTORC1 localization to the lysosome and phosphorylation of downstream targets. This facilitates constitutive basal autophagy during nutrient availability. This Mus musculus (Mouse) protein is WD repeat domain-containing protein 83 (Wdr83).